Reading from the N-terminus, the 438-residue chain is Anaerobic glycerol-3-phosphate dehydrogenase subunit B (438 aa).

Belongs to the anaerobic G-3-P dehydrogenase subunit B family. Composed of a catalytic GlpA/B dimer and of membrane bound GlpC. It depends on FMN as a cofactor.

It carries out the reaction a quinone + sn-glycerol 3-phosphate = dihydroxyacetone phosphate + a quinol. It participates in polyol metabolism; glycerol degradation via glycerol kinase pathway; glycerone phosphate from sn-glycerol 3-phosphate (anaerobic route): step 1/1. Conversion of glycerol 3-phosphate to dihydroxyacetone. Uses fumarate or nitrate as electron acceptor. The chain is Anaerobic glycerol-3-phosphate dehydrogenase subunit B from Vibrio vulnificus (strain CMCP6).